Here is a 226-residue protein sequence, read N- to C-terminus: AA9 family lytic polysaccharide monooxygenase E (226 aa).

The first 18 residues, 1 to 18 (MLANGAIVFLAAALGVSG), serve as a signal peptide directing secretion. A Cu(2+)-binding site is contributed by H19. Cystine bridges form between C56-C174 and C144-C226. The N-linked (GlcNAc...) asparagine glycan is linked to N69. H86 contributes to the Cu(2+) binding site. O2 contacts are provided by H160 and Q169. A Cu(2+)-binding site is contributed by Y171.

Belongs to the polysaccharide monooxygenase AA9 family. Requires Cu(2+) as cofactor.

The protein localises to the secreted. The enzyme catalyses [(1-&gt;4)-beta-D-glucosyl]n+m + reduced acceptor + O2 = 4-dehydro-beta-D-glucosyl-[(1-&gt;4)-beta-D-glucosyl]n-1 + [(1-&gt;4)-beta-D-glucosyl]m + acceptor + H2O.. Lytic polysaccharide monooxygenase (LPMO) that depolymerizes crystalline and amorphous polysaccharides via the oxidation of scissile alpha- or beta-(1-4)-glycosidic bonds, yielding C1 and C4 oxidation products. Catalysis by LPMOs requires the reduction of the active-site copper from Cu(II) to Cu(I) by a reducing agent and H(2)O(2) or O(2) as a cosubstrate. Shows endoglucanase activity on tamarind xyloglucan, as well as on beechwood xylan when combined with phosphoric acid swollen cellulose (PASC). Shows no activity on wheat arabinoxylan, konjac glucomannan, acetylated spruce galactoglucomannan, or cellopentaose. The chain is AA9 family lytic polysaccharide monooxygenase E from Thermothielavioides terrestris (strain ATCC 38088 / NRRL 8126) (Thielavia terrestris).